The following is a 143-amino-acid chain: Cytochrome c-type biogenesis protein CcmE (143 aa).

Residues 1–8 (MNPVRRRK) lie on the Cytoplasmic side of the membrane. A helical; Signal-anchor for type II membrane protein transmembrane segment spans residues 9 to 29 (LFILLFALTILSAAAALVLYA). Residues 30–143 (LRQNISLFYT…KSALADKVKQ (114 aa)) lie on the Periplasmic side of the membrane. Positions 124 and 128 each coordinate heme.

This sequence belongs to the CcmE/CycJ family.

Its subcellular location is the cell inner membrane. Its function is as follows. Heme chaperone required for the biogenesis of c-type cytochromes. Transiently binds heme delivered by CcmC and transfers the heme to apo-cytochromes in a process facilitated by CcmF and CcmH. This Legionella pneumophila (strain Corby) protein is Cytochrome c-type biogenesis protein CcmE.